We begin with the raw amino-acid sequence, 304 residues long: Protein BOBBER 1 (304 aa).

Ala-2 bears the N-acetylalanine mark. Residues 54–106 (EDEIVVAVRAAKEKLKKAEKKKAEKESVKPVEKKAEKEIVKLVEKKVEKESVK) are a coiled coil. The tract at residues 111–141 (ASSAEPIEVEKPKEEEEKKESGPIVPNKGNG) is disordered. Residues 118-131 (EVEKPKEEEEKKES) are compositionally biased toward basic and acidic residues. The CS domain maps to 142–231 (TDLENYSWIQ…DQMEWWKCCV (90 aa)).

As to expression, expressed in all seedling tissues with highest expression levels at the root tip.

The protein localises to the cytoplasm. It is found in the cytoplasmic granule. Functionally, small heat shock protein required for the establishment of auxin gradients and for patterning of the apical domain of the embryo. Involved in the specification of the cotyledon primordia. Also required for normal inflorescence and floral meristem function, normal developmental patterning and thermotolerance. Acts as a molecular chaperone. The sequence is that of Protein BOBBER 1 (BOB1) from Arabidopsis thaliana (Mouse-ear cress).